The following is a 570-amino-acid chain: FERM domain-containing protein 5 (570 aa).

One can recognise an FERM domain in the interval 17–298 (YSCTVRLLDD…ENQAFYKLEK (282 aa)). An interaction with ROCK1 region spans residues 308–353 (SNLFFKGSRFRYSGRVAKEVMESSAKIKREPPEIHRAGMVPSRSCP). The segment at 344–367 (AGMVPSRSCPSITHGPRLSSVPRT) is disordered. The residue at position 375 (S375) is a Phosphoserine. The disordered stretch occupies residues 385–407 (DSAHSTPVRSTSHGDTFLPHVRS). Over residues 388–398 (HSTPVRSTSHG) the composition is skewed to polar residues. A helical transmembrane segment spans residues 504–524 (LLLVTMGLLFVLLLLLIILTE).

As to quaternary structure, interacts with CTNND1. Interacts with ITGB5 (via cytoplasmic domain) and ROCK1.

The protein resides in the membrane. It is found in the cell junction. It localises to the adherens junction. Functionally, may be involved in regulation of cell migration. May regulate cell-matrix interactions via its interaction with ITGB5 and modifying ITGB5 cytoplasmic tail interactions such as with FERMT2 and TLN1. May regulate ROCK1 kinase activity possibly involved in regulation of actin stress fiber formation. The protein is FERM domain-containing protein 5 (FRMD5) of Homo sapiens (Human).